Here is a 360-residue protein sequence, read N- to C-terminus: Phospho-N-acetylmuramoyl-pentapeptide-transferase (360 aa).

Helical transmembrane passes span 27 to 47, 73 to 93, 98 to 118, 134 to 154, 168 to 188, 199 to 219, 239 to 259, 263 to 283, 288 to 308, and 337 to 357; these read GAVM…IEWL, TMGG…WADL, VWAV…DDYL, LVAQ…LGQG, LTFN…VGAS, GLAI…AYLV, LAVF…FNAP, VFMG…VSVV, IVLA…IVQV, and TVVI…LSTL.

It belongs to the glycosyltransferase 4 family. MraY subfamily. It depends on Mg(2+) as a cofactor.

The protein localises to the cell inner membrane. The catalysed reaction is UDP-N-acetyl-alpha-D-muramoyl-L-alanyl-gamma-D-glutamyl-meso-2,6-diaminopimeloyl-D-alanyl-D-alanine + di-trans,octa-cis-undecaprenyl phosphate = di-trans,octa-cis-undecaprenyl diphospho-N-acetyl-alpha-D-muramoyl-L-alanyl-D-glutamyl-meso-2,6-diaminopimeloyl-D-alanyl-D-alanine + UMP. The protein operates within cell wall biogenesis; peptidoglycan biosynthesis. Catalyzes the initial step of the lipid cycle reactions in the biosynthesis of the cell wall peptidoglycan: transfers peptidoglycan precursor phospho-MurNAc-pentapeptide from UDP-MurNAc-pentapeptide onto the lipid carrier undecaprenyl phosphate, yielding undecaprenyl-pyrophosphoryl-MurNAc-pentapeptide, known as lipid I. This is Phospho-N-acetylmuramoyl-pentapeptide-transferase from Rhodospirillum rubrum (strain ATCC 11170 / ATH 1.1.1 / DSM 467 / LMG 4362 / NCIMB 8255 / S1).